The following is a 1444-amino-acid chain: Bromodomain-containing protein 4 (1444 aa).

Disordered stretches follow at residues 1–44, 154–217, 279–362, 492–523, 540–645, 722–986, and 1020–1422; these read MGDG…PKRQ, VEIS…PQPI, AAPP…KQQE, PVMATASSSDTSSDSSSESESSTDDSEEERAQ, AALS…GGAA, CLRK…SSQP, and TSLM…RREA. Residues 11 to 27 show a composition bias toward low complexity; that stretch reads SGSSSSQGQPSSQAPSS. Positions 43-149 constitute a Bromo 1 domain; that stretch reads RQTNQLQYLL…KVFLTKISEM (107 aa). The segment covering 186 to 196 has biased composition (polar residues); the sequence is ASPQTRGLSNL. The span at 206–216 shows a compositional bias: pro residues; it reads PQGPPTLPPQP. The segment covering 303 to 319 has biased composition (polar residues); it reads TTTPTANDQLNESSPAE. Basic and acidic residues predominate over residues 327 to 347; that stretch reads PRRDNTRPSKLPKKEAPDSQH. One can recognise a Bromo 2 domain in the interval 358–467; the sequence is PKQQEQLRYC…DVFEMRFAKM (110 aa). The span at 498 to 511 shows a compositional bias: low complexity; sequence SSSDTSSDSSSESE. The NPS region stretch occupies residues 498 to 517; it reads SSSDTSSDSSSESESSTDDS. Residues 538–610 form a BID region region; the sequence is QLAALSQPQA…SKKLSKKEGG (73 aa). Over residues 549 to 569 the composition is skewed to basic residues; it reads KPKKKEKEKKEKKKDKHKKKA. In terms of domain architecture, NET spans 633–730; that stretch reads DTEEDLGLTG…SCLRKKKKPA (98 aa). 4 stretches are compositionally biased toward low complexity: residues 746–760, 800–823, 919–954, and 1036–1046; these read GTSSDSGSSSESSSS, LQPQTPALQPSIQLKQQQPQHPSP, LQQSTSQQQPPPQQTLVPPQQLQPQQQQPAPPQQQH, and PSLLQSVQVQS. Over residues 1090 to 1109 the composition is skewed to polar residues; the sequence is PLQTAQTQPGQHKVSMPSTK. Low complexity predominate over residues 1110-1121; that stretch reads AQQIIQQQQATQ. Residues 1126–1444 form a C-terminal (CTD) region region; the sequence is RQHKADSYNS…LMAIFEENLF (319 aa). Residues 1151 to 1163 are compositionally biased toward polar residues; sequence QIPQYSLVHQSPS. Basic and acidic residues predominate over residues 1246 to 1255; the sequence is QDKEKFKQEP. A compositionally biased stretch (low complexity) spans 1282–1296; that stretch reads SSTTPSSGLKSSSDS. The span at 1298-1357 shows a compositional bias: basic and acidic residues; sequence EQFRRAAREKEEREKALKAQVEQAEKDRLRKEQEKLRGRDEEDSIEPPRRPLEEPRRRQE. Positions 1367–1389 are enriched in low complexity; the sequence is QHQTQAQAQTLNPAQSPSASQPT. Over residues 1405-1422 the composition is skewed to basic and acidic residues; the sequence is QQREMARRREQERRRREA.

Belongs to the BET family. Widely expressed.

The protein resides in the nucleus. It localises to the chromosome. Chromatin reader protein that recognizes and binds acetylated histones and plays a key role in transmission of epigenetic memory across cell divisions and transcription regulation. Remains associated with acetylated chromatin throughout the entire cell cycle and provides epigenetic memory for postmitotic G1 gene transcription by preserving acetylated chromatin status and maintaining high-order chromatin structure. During interphase, plays a key role in regulating the transcription of signal-inducible genes by associating with the P-TEFb complex and recruiting it to promoters. The polypeptide is Bromodomain-containing protein 4 (brd4) (Danio rerio (Zebrafish)).